The sequence spans 610 residues: Fimbrin (610 aa).

EF-hand domains lie at 7–42 (SEISEFKASFNQFDENGDGQISALELQKILTKCGEK) and 43–78 (VTGVEVRDMIKEVDTDGNGSIDFKEFLQVMQKARQH). Ca(2+) contacts are provided by D20, N22, D24, Q26, E31, D56, D58, N60, S62, and E67. Actin-binding regions lie at residues 102-365 (YSGS…NTHP) and 366-608 (ALEP…QVEM). 4 Calponin-homology (CH) domains span residues 116 to 232 (DEEK…KIGL), 260 to 365 (LPVE…NTHP), 379 to 488 (TREE…RGHV), and 501 to 608 (PIAD…QVEM).

Its function is as follows. Binds to actin. In Dictyostelium discoideum (Social amoeba), this protein is Fimbrin (fimA).